Reading from the N-terminus, the 335-residue chain is Probable pectinesterase 29 (335 aa).

The signal sequence occupies residues 1–24 (MGTHRIFIGLIALCCFCLPHLIEA). Asparagine 43 carries an N-linked (GlcNAc...) asparagine glycan. Aspartate 166 (proton donor) is an active-site residue. Residue aspartate 187 is the Nucleophile of the active site. Substrate is bound by residues arginine 248 and tryptophan 250. Asparagine 262 carries an N-linked (GlcNAc...) asparagine glycan.

This sequence belongs to the pectinesterase family. As to expression, expressed in flower buds.

It is found in the secreted. The protein resides in the cell wall. The catalysed reaction is [(1-&gt;4)-alpha-D-galacturonosyl methyl ester](n) + n H2O = [(1-&gt;4)-alpha-D-galacturonosyl](n) + n methanol + n H(+). The protein operates within glycan metabolism; pectin degradation; 2-dehydro-3-deoxy-D-gluconate from pectin: step 1/5. Its function is as follows. Acts in the modification of cell walls via demethylesterification of cell wall pectin. The protein is Probable pectinesterase 29 (PME29) of Arabidopsis thaliana (Mouse-ear cress).